The following is a 219-amino-acid chain: Probable GTP-binding protein EngB (219 aa).

The EngB-type G domain occupies 24 to 207 (VQPEIAFAGR…HELIESWLRP (184 aa)). GTP-binding positions include 32 to 39 (GRSNAGKS), 59 to 63 (GRTQH), 81 to 84 (DLPG), 148 to 151 (TKCD), and 186 to 188 (FSA). Mg(2+) is bound by residues Ser-39 and Thr-61.

It belongs to the TRAFAC class TrmE-Era-EngA-EngB-Septin-like GTPase superfamily. EngB GTPase family. Mg(2+) is required as a cofactor.

In terms of biological role, necessary for normal cell division and for the maintenance of normal septation. The sequence is that of Probable GTP-binding protein EngB from Burkholderia vietnamiensis (strain G4 / LMG 22486) (Burkholderia cepacia (strain R1808)).